We begin with the raw amino-acid sequence, 308 residues long: Olfactory receptor 2T7 (308 aa).

The Extracellular portion of the chain corresponds to 1–17 (MPTLSFWVCSATPVSPG). Residues 18 to 40 (FFALILLVFVTSIASNVVKIILI) traverse the membrane as a helical segment. Residues 41–51 (HIDSRLHTPMY) are Cytoplasmic-facing. Residues 52 to 74 (FLLSQLSLRDILYISTIVPKMLV) traverse the membrane as a helical segment. Topologically, residues 75 to 88 (DQVMSQRAISFAGC) are extracellular. A disulfide bridge links C88 with C170. Residues 89–109 (TAQHFLYLTLAGAEFFLLGLM) form a helical membrane-spanning segment. The Cytoplasmic portion of the chain corresponds to 110–130 (SCDRYVAICNPLHYPDLMSRK). A helical membrane pass occupies residues 131-151 (ICWLIVAAAWLGGSIDGFLLT). At 152 to 188 (PVTMQFPFCASREINHFFCEVPALLKLSCTDTSAYET) the chain is on the extracellular side. A helical membrane pass occupies residues 189–209 (AMYVCCIMMLLIPFSVISGSY). Residues 210–235 (TRILITVYRMSEAEGRRKAVATCSSH) lie on the Cytoplasmic side of the membrane. Residues 236–256 (MVVVSLFYGAAMYTYVLPHSY) form a helical membrane-spanning segment. At 257-262 (HTPEQD) the chain is on the extracellular side. The helical transmembrane segment at 263–283 (KAVSAFYTILTPMLNPLIYSL) threads the bilayer. Residues 284–308 (RNKDVTGALQKVVGRCVSSGKVTTF) lie on the Cytoplasmic side of the membrane.

The protein belongs to the G-protein coupled receptor 1 family.

It localises to the cell membrane. Functionally, odorant receptor. The chain is Olfactory receptor 2T7 (OR2T7) from Homo sapiens (Human).